The following is a 179-amino-acid chain: Large ribosomal subunit protein uL5 (179 aa).

It belongs to the universal ribosomal protein uL5 family. Part of the 50S ribosomal subunit; part of the 5S rRNA/L5/L18/L25 subcomplex. Contacts the 5S rRNA and the P site tRNA. Forms a bridge to the 30S subunit in the 70S ribosome.

Functionally, this is one of the proteins that bind and probably mediate the attachment of the 5S RNA into the large ribosomal subunit, where it forms part of the central protuberance. In the 70S ribosome it contacts protein S13 of the 30S subunit (bridge B1b), connecting the 2 subunits; this bridge is implicated in subunit movement. Contacts the P site tRNA; the 5S rRNA and some of its associated proteins might help stabilize positioning of ribosome-bound tRNAs. The protein is Large ribosomal subunit protein uL5 of Bordetella bronchiseptica (strain ATCC BAA-588 / NCTC 13252 / RB50) (Alcaligenes bronchisepticus).